The sequence spans 395 residues: Bone morphogenetic protein 2 (395 aa).

The first 23 residues, Met-1–Gly-23, serve as a signal peptide directing secretion. The propeptide at Leu-24–Arg-281 is cleaved by PCSK5. Ser-86 bears the Phosphoserine mark. N-linked (GlcNAc...) asparagine glycosylation is found at Asn-134 and Asn-199. Residues Gly-270 to Lys-292 form a disordered region. Positions His-273–Lys-292 are enriched in basic residues. 3 disulfides stabilise this stretch: Cys-295–Cys-360, Cys-324–Cys-392, and Cys-328–Cys-394. A glycan (N-linked (GlcNAc...) asparagine) is linked at Asn-337.

Belongs to the TGF-beta family. As to quaternary structure, homodimer; disulfide-linked. Interacts with SOSTDC1. Interacts with GREM2, RGMA, RGMB and RGMC. Interacts with ASPN. Interacts with MAFP5. Interacts with FBN1 (via N-terminal domain) and FBN2. Interacts with type I receptor BMPR1A. Interacts with type II receptor BMPR2. Interacts with SCUBE3. Interacts with TNFAIP6 (primarily via Link domain); this interaction is inhibited by hyaluronan. Interacts with ERFE. Interacts with BMPR1A/ALK3; the interaction may induce HAMP expression. Forms heterodimers with BMP6 in vitro; the heterodimer then binds to its receptor BMPR1A /ALK3 and may induce HAMP expression. Interacts with TGFBR3.

It is found in the secreted. Functionally, growth factor of the TGF-beta superfamily that plays essential roles in many developmental processes, including cardiogenesis, neurogenesis, and osteogenesis. Induces cartilage and bone formation. Initiates the canonical BMP signaling cascade by associating with type I receptor BMPR1A and type II receptor BMPR2. Once all three components are bound together in a complex at the cell surface, BMPR2 phosphorylates and activates BMPR1A. In turn, BMPR1A propagates signal by phosphorylating SMAD1/5/8 that travel to the nucleus and act as activators and repressors of transcription of target genes. Also acts to promote expression of HAMP, via the interaction with its receptor BMPR1A/ALK3. Can also signal through non-canonical pathways such as ERK/MAP kinase signaling cascade that regulates osteoblast differentiation. Also stimulates the differentiation of myoblasts into osteoblasts via the EIF2AK3-EIF2A-ATF4 pathway by stimulating EIF2A phosphorylation which leads to increased expression of ATF4 which plays a central role in osteoblast differentiation. Acts as a positive regulator of odontoblast differentiation during mesenchymal tooth germ formation, expression is repressed during the bell stage by MSX1-mediated inhibition of CTNNB1 signaling. In Oryctolagus cuniculus (Rabbit), this protein is Bone morphogenetic protein 2 (BMP2).